The sequence spans 347 residues: Ribosomal RNA small subunit methyltransferase H (347 aa).

Residues 50 to 52 (GGH), D69, F96, D125, and Q132 contribute to the S-adenosyl-L-methionine site.

It belongs to the methyltransferase superfamily. RsmH family.

Its subcellular location is the cytoplasm. The catalysed reaction is cytidine(1402) in 16S rRNA + S-adenosyl-L-methionine = N(4)-methylcytidine(1402) in 16S rRNA + S-adenosyl-L-homocysteine + H(+). Specifically methylates the N4 position of cytidine in position 1402 (C1402) of 16S rRNA. The polypeptide is Ribosomal RNA small subunit methyltransferase H (Corynebacterium aurimucosum (strain ATCC 700975 / DSM 44827 / CIP 107346 / CN-1) (Corynebacterium nigricans)).